Consider the following 625-residue polypeptide: Glutamine--fructose-6-phosphate aminotransferase [isomerizing] (625 aa).

Cys-2 acts as the Nucleophile; for GATase activity in catalysis. The Glutamine amidotransferase type-2 domain occupies 2–229 (CGLVGYVGQR…QDQAVVITAD (228 aa)). SIS domains are found at residues 298–437 (SDQE…ARGT) and 470–615 (LAYR…VDKP). The For Fru-6P isomerization activity role is filled by Lys-620.

As to quaternary structure, homodimer.

Its subcellular location is the cytoplasm. It carries out the reaction D-fructose 6-phosphate + L-glutamine = D-glucosamine 6-phosphate + L-glutamate. Its function is as follows. Catalyzes the first step in hexosamine metabolism, converting fructose-6P into glucosamine-6P using glutamine as a nitrogen source. This chain is Glutamine--fructose-6-phosphate aminotransferase [isomerizing], found in Mycobacterium leprae (strain TN).